The chain runs to 379 residues: tRNA-specific 2-thiouridylase MnmA (379 aa).

ATP is bound by residues Ala6–Ser13 and Leu32. The Nucleophile role is filled by Cys101. Cysteines 101 and 199 form a disulfide. Residue Gly125 participates in ATP binding. An interaction with tRNA region spans residues Lys148–Gln150. Cys199 serves as the catalytic Cysteine persulfide intermediate.

The protein belongs to the MnmA/TRMU family.

It is found in the cytoplasm. The enzyme catalyses S-sulfanyl-L-cysteinyl-[protein] + uridine(34) in tRNA + AH2 + ATP = 2-thiouridine(34) in tRNA + L-cysteinyl-[protein] + A + AMP + diphosphate + H(+). In terms of biological role, catalyzes the 2-thiolation of uridine at the wobble position (U34) of tRNA, leading to the formation of s(2)U34. The polypeptide is tRNA-specific 2-thiouridylase MnmA (Arthrobacter sp. (strain FB24)).